The primary structure comprises 93 residues: Small ribosomal subunit protein bS18 (93 aa).

Basic residues predominate over residues 1-11; that stretch reads MAPSARNRKPG. Positions 1-27 are disordered; it reads MAPSARNRKPGARSMAKAAALRKPKKK.

The protein belongs to the bacterial ribosomal protein bS18 family. As to quaternary structure, part of the 30S ribosomal subunit. Forms a tight heterodimer with protein bS6.

In terms of biological role, binds as a heterodimer with protein bS6 to the central domain of the 16S rRNA, where it helps stabilize the platform of the 30S subunit. The protein is Small ribosomal subunit protein bS18 of Salinispora tropica (strain ATCC BAA-916 / DSM 44818 / JCM 13857 / NBRC 105044 / CNB-440).